The chain runs to 115 residues: Large ribosomal subunit protein uL18 (115 aa).

It belongs to the universal ribosomal protein uL18 family. In terms of assembly, part of the 50S ribosomal subunit; part of the 5S rRNA/L5/L18/L25 subcomplex. Contacts the 5S and 23S rRNAs.

This is one of the proteins that bind and probably mediate the attachment of the 5S RNA into the large ribosomal subunit, where it forms part of the central protuberance. This is Large ribosomal subunit protein uL18 from Vesicomyosocius okutanii subsp. Calyptogena okutanii (strain HA).